The primary structure comprises 136 residues: ATP synthase epsilon chain (136 aa).

This sequence belongs to the ATPase epsilon chain family. In terms of assembly, F-type ATPases have 2 components, CF(1) - the catalytic core - and CF(0) - the membrane proton channel. CF(1) has five subunits: alpha(3), beta(3), gamma(1), delta(1), epsilon(1). CF(0) has three main subunits: a, b and c.

The protein localises to the cell membrane. Functionally, produces ATP from ADP in the presence of a proton gradient across the membrane. This chain is ATP synthase epsilon chain, found in Exiguobacterium sp. (strain ATCC BAA-1283 / AT1b).